Reading from the N-terminus, the 466-residue chain is MSIASIASVFKGDFAPGTEITVRGWVRTRRDSKAGISFLAVYDGSCFDAIQGVVPNALSNYNDEVLKLTAGCSVEMTGNLVESPGSGQAFELQATAVKVTGWVDDPDTYPMAAKRHSIEHLRDVAHLRPRTNIIGAVARVRNCLSQAIHRFYHENGFIWVSTPIITASDCEGAGEMFRVSTLDMENLPRTDAGKVDYDQDFFGKEAFLTVSGQLNGETYACALSKIYTFGPTFRAENSNTSRHLAEFWMVEPEVAFADLNDIAGLAESMLKYCFNAVLQERMDDMKFFAERVDGSVIDRLQSFVSSDFAQVDYTDAVEILQNCGKTFEYPVEWGIDLQSEHERYLAEEHFKAPVVVKNYPKDIKAFYMRLNEDGKTVAAMDVLAPGIGEIIGGSQREERLDVLDARLEEMNLSKEDYWWYRDLRRYGTVPHAGFGLGFERLVSYVTGVGNIRDVIPFPRAPRSANF.

Belongs to the class-II aminoacyl-tRNA synthetase family. As to quaternary structure, homodimer.

It is found in the cytoplasm. The catalysed reaction is tRNA(Asn) + L-asparagine + ATP = L-asparaginyl-tRNA(Asn) + AMP + diphosphate + H(+). The chain is Asparagine--tRNA ligase from Shewanella amazonensis (strain ATCC BAA-1098 / SB2B).